A 165-amino-acid chain; its full sequence is Neuritin-like protein (165 aa).

Positions 1 to 35 (MMRCCRRRCCCRQPPHALRPLLLLPLVLLPPLAAA) are cleaved as a signal peptide. A lipid anchor (GPI-anchor amidated alanine) is attached at Ala-139. A propeptide spans 140–165 (PALPMAPAPPLLAAALALAYLLRPLA) (removed in mature form).

This sequence belongs to the neuritin family.

The protein resides in the cell membrane. This is Neuritin-like protein (NRN1L) from Homo sapiens (Human).